The chain runs to 367 residues: Peptide chain release factor 2 (367 aa).

Q254 is subject to N5-methylglutamine.

Belongs to the prokaryotic/mitochondrial release factor family. Methylated by PrmC. Methylation increases the termination efficiency of RF2.

Its subcellular location is the cytoplasm. Peptide chain release factor 2 directs the termination of translation in response to the peptide chain termination codons UGA and UAA. This is Peptide chain release factor 2 from Neisseria meningitidis serogroup A / serotype 4A (strain DSM 15465 / Z2491).